The following is a 239-amino-acid chain: DNA repair protein RecO (239 aa).

The protein belongs to the RecO family.

Functionally, involved in DNA repair and RecF pathway recombination. This Stenotrophomonas maltophilia (strain K279a) protein is DNA repair protein RecO.